A 298-amino-acid polypeptide reads, in one-letter code: Pyridoxal 5'-phosphate synthase subunit PdxS (298 aa).

Aspartate 24 serves as a coordination point for D-ribose 5-phosphate. Lysine 81 functions as the Schiff-base intermediate with D-ribose 5-phosphate in the catalytic mechanism. Residue glycine 153 participates in D-ribose 5-phosphate binding. Position 165 (arginine 165) interacts with D-glyceraldehyde 3-phosphate. D-ribose 5-phosphate is bound by residues glycine 214 and 235 to 236 (GS).

The protein belongs to the PdxS/SNZ family. In the presence of PdxT, forms a dodecamer of heterodimers.

The enzyme catalyses aldehydo-D-ribose 5-phosphate + D-glyceraldehyde 3-phosphate + L-glutamine = pyridoxal 5'-phosphate + L-glutamate + phosphate + 3 H2O + H(+). It participates in cofactor biosynthesis; pyridoxal 5'-phosphate biosynthesis. Its function is as follows. Catalyzes the formation of pyridoxal 5'-phosphate from ribose 5-phosphate (RBP), glyceraldehyde 3-phosphate (G3P) and ammonia. The ammonia is provided by the PdxT subunit. Can also use ribulose 5-phosphate and dihydroxyacetone phosphate as substrates, resulting from enzyme-catalyzed isomerization of RBP and G3P, respectively. This is Pyridoxal 5'-phosphate synthase subunit PdxS from Halalkalibacterium halodurans (strain ATCC BAA-125 / DSM 18197 / FERM 7344 / JCM 9153 / C-125) (Bacillus halodurans).